A 355-amino-acid chain; its full sequence is Mu-like prophage FluMu I protein (355 aa).

The protein belongs to the peptidase U35 family.

Potential protease involved in virion morphogenesis. This chain is Mu-like prophage FluMu I protein, found in Haemophilus influenzae (strain ATCC 51907 / DSM 11121 / KW20 / Rd).